The sequence spans 178 residues: Probable chorismate pyruvate-lyase (178 aa).

Substrate-binding residues include Arg67, Leu105, and Glu164.

Belongs to the UbiC family.

The protein resides in the cytoplasm. The enzyme catalyses chorismate = 4-hydroxybenzoate + pyruvate. The protein operates within cofactor biosynthesis; ubiquinone biosynthesis. Its function is as follows. Removes the pyruvyl group from chorismate, with concomitant aromatization of the ring, to provide 4-hydroxybenzoate (4HB) for the ubiquinone pathway. The polypeptide is Probable chorismate pyruvate-lyase (Methylobacillus flagellatus (strain ATCC 51484 / DSM 6875 / VKM B-1610 / KT)).